We begin with the raw amino-acid sequence, 361 residues long: Gibberellin 20 oxidase 1-D (361 aa).

Residues 199-299 (GNDSIMRLNY…RKSLAFFLCP (101 aa)) form the Fe2OG dioxygenase domain. 3 residues coordinate Fe cation: H224, D226, and H280. The active site involves R290.

It belongs to the iron/ascorbate-dependent oxidoreductase family. GA20OX subfamily. Fe cation is required as a cofactor. The cofactor is L-ascorbate. As to expression, expressed in nodes and the ear of the elongating stem.

The enzyme catalyses gibberellin A12 + 2 2-oxoglutarate + 3 O2 + H(+) = gibberellin A9 + 2 succinate + 3 CO2 + 2 H2O. It catalyses the reaction gibberellin A53 + 2 2-oxoglutarate + 3 O2 + H(+) = gibberellin A20 + 2 succinate + 3 CO2 + 2 H2O. Key oxidase enzyme in the biosynthesis of gibberellin that catalyzes the conversion of GA12 and GA53 to GA9 and GA20 respectively, via a three-step oxidation at C-20 of the GA skeleton. The protein is Gibberellin 20 oxidase 1-D (GA20ox1D) of Triticum aestivum (Wheat).